The following is a 1254-amino-acid chain: Structural polyprotein (1254 aa).

The necessary for nucleocapsid assembly and virus assembly stretch occupies residues 1 to 33 (MFPFQPMYPMQPMPYRNPFAAPRRPWFPRTDPF). Positions 33–68 (FLAMQVQELTRSMANLTFKQRRDAPPEGPSAKKPKK) are host transcription inhibition. The Supraphysiological nuclear export signal signature appears at 41–48 (LTRSMANL). The interval 45-119 (MANLTFKQRR…KKPGKRQRMV (75 aa)) is disordered. Positions 64–68 (KKPKK) match the Nuclear localization signal motif. A compositionally biased stretch (basic residues) spans 80-92 (GKKKKNQGKKKAK). The binding to the viral RNA stretch occupies residues 91-127 (AKTGPPNPKAQNGNKKKTNKKPGKRQRMVMKLESDKT). A phosphothreonine mark is found at Thr93 and Thr108. The span at 104–118 (NKKKTNKKPGKRQRM) shows a compositional bias: basic residues. The interval 112–126 (PGKRQRMVMKLESDK) is ribosome-binding. Ser124 carries the phosphoserine modification. The region spanning 126–275 (KTFPIMLEGK…KYTPENCEQW (150 aa)) is the Peptidase S3 domain. Phosphothreonine is present on Thr127. Residues His152, Asp174, and Ser226 each act as charge relay system in the active site. Positions 276–287 (SLVTTMCLLANV) are functions as an uncleaved signal peptide for the precursor of protein E3/E2. Over 276–701 (SLVTTMCLLA…HYYHRYPMST (426 aa)) the chain is Extracellular. Residues Asn286, Asn546, and Asn652 are each glycosylated (N-linked (GlcNAc...) asparagine; by host). Residues 702 to 722 (ILGLSICAAIATVSVAASTWL) traverse the membrane as a helical segment. Topologically, residues 723–757 (FCRSRVACLTPYRLTPNARIPFCLAVLCCARTARA) are cytoplasmic. Residues Cys730, Cys750, and Cys751 are each lipidated (S-palmitoyl cysteine; by host). Topologically, residues 758–772 (ETTWESLDHLWNNNQ) are extracellular. Residues 773–793 (QMFWIQLLIPLAALIVVTRLL) form a helical membrane-spanning segment. Over 794–795 (RC) the chain is Cytoplasmic. A helical transmembrane segment spans residues 796 to 816 (VCCVVPFLVMAGAAAPAYEHA). The Extracellular portion of the chain corresponds to 817 to 1224 (TTMPSQAGIS…SKTAWTWLTS (408 aa)). 4 disulfides stabilise this stretch: Cys861–Cys926, Cys874–Cys906, Cys875–Cys908, and Cys880–Cys890. An E1 fusion peptide loop region spans residues 896 to 913 (VYPFMWGGAYCFCDTENT). N-linked (GlcNAc...) asparagine; by host glycosylation is present at Asn946. Disulfide bonds link Cys1071-Cys1083, Cys1113-Cys1188, Cys1118-Cys1192, and Cys1140-Cys1182. The chain crosses the membrane as a helical span at residues 1225-1245 (LLGGSAVIIIIGLVLATIVAM). At 1246-1254 (YVLTNQKHN) the chain is on the cytoplasmic side.

As to quaternary structure, homodimer. Homomultimer. Interacts with host karyopherin KPNA4; this interaction allows the nuclear import of the viral capsid protein. Interacts with spike glycoprotein E2. Interacts with host IRAK1; the interaction leads to inhibition of IRAK1-dependent signaling. Part of a tetrameric complex composed of host CRM1, host importin alpha/beta dimer and the viral capsid; this complex blocks the receptor-mediated transport through the nuclear pore. Interacts with host phosphatase PPP1CA; this interaction dephosphorylates the capsid protein, which increases its ability to bind to the viral genome. The precursor of protein E3/E2 and E1 form a heterodimer shortly after synthesis. In terms of assembly, interacts with spike glycoprotein E2. The precursor of protein E3/E2 and E1 form a heterodimer shortly after synthesis. Processing of the precursor of protein E3/E2 into E2 and E3 results in a heterodimer of the spike glycoproteins E2 and E1. Spike at virion surface are constituted of three E2-E1 heterodimers. After target cell attachment and endocytosis, E1 change conformation to form homotrimers. Interacts with 6K protein. Interacts (via fusion peptide loop) with host LDLRAD3 (via domain LDL-receptor class A 1); this interaction mediates viral entry to the host cell. 2 adjacent E2-E1 heterodimers in the trimeric spike interact with host LDLRAD3. As to quaternary structure, interacts with spike glycoprotein E1. Processing of the precursor of protein E3/E2 into E2 and E3 results in a heterodimer of the spike glycoproteins E2 and E1. Spike at virion surface are constituted of a trimer of E2-E1 heterodimers. Interacts with 6K protein. Interacts with host LDLRAD3 (via domain LDL-receptor class A 1); this interaction mediates viral entry to the host cell. 2 adjacent E2-E1 heterodimers in the trimeric spike interact with host LDLRAD3. Oligomer. Interacts with spike glycoprotein E1. Interacts with spike glycoprotein E2. Post-translationally, structural polyprotein: Specific enzymatic cleavages in vivo yield mature proteins. Capsid protein is auto-cleaved during polyprotein translation, unmasking a signal peptide at the N-terminus of the precursor of E3/E2. The remaining polyprotein is then targeted to the host endoplasmic reticulum, where host signal peptidase cleaves it into pE2, 6K and E1 proteins. pE2 is further processed to mature E3 and E2 by host furin in trans-Golgi vesicle. In terms of processing, phosphorylated on serine and threonine residues. Palmitoylated via thioester bonds. These palmitoylations may induce disruption of the C-terminus transmembrane. This would result in the reorientation of E2 C-terminus from lumenal to cytoplasmic side. Post-translationally, N-glycosylated. In terms of processing, palmitoylated via thioester bonds.

The protein resides in the virion. It localises to the host cytoplasm. Its subcellular location is the host cell membrane. The protein localises to the host nucleus. It is found in the virion membrane. It carries out the reaction Autocatalytic release of the core protein from the N-terminus of the togavirus structural polyprotein by hydrolysis of a -Trp-|-Ser- bond.. Functionally, forms an icosahedral capsid with a T=4 symmetry composed of 240 copies of the capsid protein surrounded by a lipid membrane through which penetrate 80 spikes composed of trimers of E1-E2 heterodimers. The capsid protein binds to the viral RNA genome at a site adjacent to a ribosome binding site for viral genome translation following genome release. Possesses a protease activity that results in its autocatalytic cleavage from the nascent structural protein. Following its self-cleavage, the capsid protein transiently associates with ribosomes, and within several minutes the protein binds to viral RNA and rapidly assembles into icosahedric core particles. The resulting nucleocapsid eventually associates with the cytoplasmic domain of the spike glycoprotein E2 at the cell membrane, leading to budding and formation of mature virions. In case of infection, new virions attach to target cells and after clathrin-mediated endocytosis their membrane fuses with the host endosomal membrane. This leads to the release of the nucleocapsid into the cytoplasm, followed by an uncoating event necessary for the genomic RNA to become accessible. The uncoating might be triggered by the interaction of capsid proteins with ribosomes. Binding of ribosomes would release the genomic RNA since the same region is genomic RNA-binding and ribosome-binding. Specifically inhibits interleukin-1 receptor-associated kinase 1/IRAK1-dependent signaling during viral entry, representing a means by which the alphaviruses may evade innate immune detection and activation prior to viral gene expression. Inhibits host transcription. Forms a tetrameric complex with XPO1/CRM1 and the nuclear import receptor importin. This complex blocks the central channel of host nuclear pores thereby inhibiting the receptor-mediated nuclear transport and thus the host mRNA and rRNA transcription. The inhibition of transcription is linked to a cytopathic effect on the host cell. Provides the signal sequence for the translocation of the precursor of protein E3/E2 to the host endoplasmic reticulum. Furin-cleaved E3 remains associated with spike glycoprotein E1 and mediates pH protection of the latter during the transport via the secretory pathway. After virion release from the host cell, the assembly protein E3 is gradually released in the extracellular space. Its function is as follows. Plays a role in viral attachment to target host cell, by binding to the cell receptor LDLRAD3. Synthesized as a p62 precursor which is processed by furin at the cell membrane just before virion budding, giving rise to E2-E1 heterodimer. The p62-E1 heterodimer is stable, whereas E2-E1 is unstable and dissociate at low pH. p62 is processed at the last step, presumably to avoid E1 fusion activation before its final export to cell surface. E2 C-terminus contains a transitory transmembrane that would be disrupted by palmitoylation, resulting in reorientation of the C-terminal tail from lumenal to cytoplasmic side. This step is critical since E2 C-terminus is involved in budding by interacting with capsid proteins. This release of E2 C-terminus in cytoplasm occurs lately in protein export, and precludes premature assembly of particles at the endoplasmic reticulum membrane. In terms of biological role, acts as a viroporin that participates in virus glycoprotein processing and transport to the plasma membrane, cell permeabilization and budding of viral particles. Disrupts the calcium homeostasis of the cell, probably at the endoplasmic reticulum level. This leads to cytoplasmic calcium elevation. Because of its lipophilic properties, the 6K protein is postulated to influence the selection of lipids that interact with the transmembrane domains of the glycoproteins, which, in turn, affects the deformability of the bilayer required for the extreme curvature that occurs as budding proceeds. Present in low amount in virions, about 3% compared to viral glycoproteins. Functionally, class II viral fusion protein. Fusion activity is inactive as long as E1 is bound to E2 in mature virion. After virus attachment to cell receptor LDLRAD3 and endocytosis, acidification of the endosome induce dissociation of E1/E2 heterodimer and concomitant trimerization of the E1 subunits. This E1 trimer is fusion active, and promotes release of viral nucleocapsid in cytoplasm after endosome and viral membrane fusion. Efficient fusion requires the presence of cholesterol and sphingolipid in the target membrane. This Bos taurus (Bovine) protein is Structural polyprotein.